The following is a 414-amino-acid chain: Dihydroorotase (414 aa).

His-56 and His-58 together coordinate Zn(2+). Substrate is bound by residues 58–60 and Asn-90; that span reads HFR. Zn(2+)-binding residues include Lys-138, His-171, His-219, and Asp-280. Residue Lys-138 is modified to N6-carboxylysine. The active site involves Asp-280. His-284 serves as a coordination point for substrate.

Belongs to the metallo-dependent hydrolases superfamily. DHOase family. Class I DHOase subfamily. Requires Zn(2+) as cofactor.

The catalysed reaction is (S)-dihydroorotate + H2O = N-carbamoyl-L-aspartate + H(+). It participates in pyrimidine metabolism; UMP biosynthesis via de novo pathway; (S)-dihydroorotate from bicarbonate: step 3/3. In terms of biological role, catalyzes the reversible cyclization of carbamoyl aspartate to dihydroorotate. The sequence is that of Dihydroorotase from Thermoplasma acidophilum (strain ATCC 25905 / DSM 1728 / JCM 9062 / NBRC 15155 / AMRC-C165).